Here is a 430-residue protein sequence, read N- to C-terminus: Putative golgin subfamily A member 8D (430 aa).

A coiled-coil region spans residues 2–217; it reads EWKLEQSMRE…LTAQLSLMAL (216 aa). Disordered stretches follow at residues 138–158, 217–239, 290–331, and 382–406; these read LREQEERLQEQQERLPEQEER, LPGEGHGGEHLDSEGEEAPRPMP, PITK…GVAA, and PVQGEAREGSPHDNPTAQPIVQDHQ. Residues 222 to 235 show a composition bias toward basic and acidic residues; that stretch reads HGGEHLDSEGEEAP. The span at 303–316 shows a compositional bias: gly residues; sequence PGGGHHQAGPGQGG.

This sequence belongs to the GOLGA8 family.

This chain is Putative golgin subfamily A member 8D (GOLGA8DP), found in Homo sapiens (Human).